Consider the following 804-residue polypeptide: Probable phosphoketolase (804 aa).

This sequence belongs to the XFP family. It depends on thiamine diphosphate as a cofactor.

In Mycobacterium avium (strain 104), this protein is Probable phosphoketolase.